A 300-amino-acid polypeptide reads, in one-letter code: Protoheme IX farnesyltransferase (300 aa).

A run of 8 helical transmembrane segments spans residues 24–44 (VTQL…PGMV), 46–66 (WHVL…AFAI), 94–114 (PQIL…LYTF), 118–138 (LTMW…TLLL), 146–166 (IVIG…AVTG), 172–192 (AWIL…VLAL), 224–244 (VILF…VVYL), and 278–298 (IVYL…RPLL).

This sequence belongs to the UbiA prenyltransferase family. Protoheme IX farnesyltransferase subfamily.

The protein resides in the cell inner membrane. The catalysed reaction is heme b + (2E,6E)-farnesyl diphosphate + H2O = Fe(II)-heme o + diphosphate. It participates in porphyrin-containing compound metabolism; heme O biosynthesis; heme O from protoheme: step 1/1. Functionally, converts heme B (protoheme IX) to heme O by substitution of the vinyl group on carbon 2 of heme B porphyrin ring with a hydroxyethyl farnesyl side group. This chain is Protoheme IX farnesyltransferase, found in Burkholderia ambifaria (strain MC40-6).